A 315-amino-acid polypeptide reads, in one-letter code: Calcium homeostasis modulator protein 6 (315 aa).

The Cytoplasmic portion of the chain corresponds to 1 to 21 (MEKFRAVLDLHVKHHSALGYG). The helical transmembrane segment at 22 to 37 (LVTLLTAGGERIFSAV) threads the bilayer. The Extracellular portion of the chain corresponds to 38–46 (AFQCPCSAA). Disulfide bonds link Cys41/Cys126, Cys43/Cys155, and Cys139/Cys146. A helical membrane pass occupies residues 47–68 (WNLPYGLVFLLVPALALFLLGY). Residues 69–102 (VLSARTWRLLTGCCSSARASCGSALRGSLVCTQI) lie on the Cytoplasmic side of the membrane. The helical transmembrane segment at 103–127 (SAAAALAPLTWVAVALLGGAFYECA) threads the bilayer. Residues 128-169 (ATGSAAFAQRLCLGRNRSCAAELPLVPCNQAKASDVQDLLKD) are Extracellular-facing. The helical transmembrane segment at 170-192 (LKAQSQVLGWILIAVVIIILLIF) threads the bilayer. Over 193 to 315 (TSVTRCLSPV…SSGINSTPEL (123 aa)) the chain is Cytoplasmic.

The protein belongs to the CALHM family. In terms of assembly, oligomerizes to form decameric and undecameric channels. N-glycosylated. As to expression, placenta.

It is found in the cell membrane. The catalysed reaction is ATP(in) = ATP(out). Functionally, pore-forming subunit of an ATP-permeable channel. In response to pathogen-derived and proinflammatory stimuli, relocates from intracellular compartments to NK-dendritic cell and NK-macrophage immune synapses where it mediates ATP efflux and NK cell activation involved in antimicrobial and antitumor responses. May assemble to form gap junction channel-like structures with gating and ion conductance likely regulated by membrane lipids and voltage rather than by extracellular calcium levels. This Homo sapiens (Human) protein is Calcium homeostasis modulator protein 6.